Here is a 694-residue protein sequence, read N- to C-terminus: Frizzled-8 (694 aa).

The signal sequence occupies residues 1–27 (MEWGYLLEVTSLLAALALLQRSSGAAA). At 28-275 (ASAKELACQE…NPFFSQDERA (248 aa)) the chain is on the extracellular side. One can recognise an FZ domain in the interval 30-151 (AKELACQEIT…GNPDTLCMDY (122 aa)). 5 cysteine pairs are disulfide-bonded: Cys-35/Cys-96, Cys-43/Cys-89, Cys-80/Cys-118, Cys-107/Cys-148, and Cys-111/Cys-135. N-linked (GlcNAc...) asparagine glycosylation is present at Asn-49. Position 71-78 (71-78 (QFWPLVEI)) interacts with hexadecanoate. The segment at 95–100 (ICLEDY) is wnt-binding. The tract at residues 147–152 (LCMDYN) is wnt-binding. N-linked (GlcNAc...) asparagine glycosylation is present at Asn-152. The segment at 155–226 (DLTTAAPSPP…KARPPGGGAA (72 aa)) is disordered. Positions 161 to 175 (PSPPRRLPPPPPGEQ) are enriched in pro residues. Residues 176–186 (PPSGSGHGRPP) are compositionally biased toward low complexity. Positions 210–225 (RGGGGGGKARPPGGGA) are enriched in gly residues. The chain crosses the membrane as a helical span at residues 276-296 (FTVFWIGLWSVLCFVSTFATV). Over 297–312 (STFLIDMERFKYPERP) the chain is Cytoplasmic. The chain crosses the membrane as a helical span at residues 313-333 (IIFLSACYLFVSVGYLVRLVA). Topologically, residues 334–396 (GHEKVACSGG…RYETTGPALC (63 aa)) are extracellular. The helical transmembrane segment at 397-417 (TVVFLLVYFFGMASSIWWVIL) threads the bilayer. Residues 418-439 (SLTWFLAAGMKWGNEAIAGYSQ) lie on the Cytoplasmic side of the membrane. The helical transmembrane segment at 440–460 (YFHLAAWLVPSVKSIAVLALS) threads the bilayer. The Extracellular segment spans residues 461–483 (SVDGDPVAGICYVGNQSLDNLRG). A glycan (N-linked (GlcNAc...) asparagine) is linked at Asn-475. A helical membrane pass occupies residues 484-504 (FVLAPLVIYLFIGTMFLLAGF). Residues 505 to 532 (VSLFRIRSVIKQQDGPTKTHKLEKLMIR) lie on the Cytoplasmic side of the membrane. A helical membrane pass occupies residues 533-553 (LGLFTVLYTVPAAVVVACLFY). Topologically, residues 554–584 (EQHNRPRWEATHNCPCLRDLQPDQARRPDYA) are extracellular. Residues 585–605 (VFMLKYFMCLVVGITSGVWVW) traverse the membrane as a helical segment. The Cytoplasmic segment spans residues 606-694 (SGKTLESWRS…YPKQMPLSQV (89 aa)). The short motif at 608–613 (KTLESW) is the Lys-Thr-X-X-X-Trp motif, mediates interaction with the PDZ domain of Dvl family members element. Positions 648–664 (GGGGPGGGGGPGGGGGS) are enriched in gly residues. A disordered region spans residues 648–668 (GGGGPGGGGGPGGGGGSLYSD). The PDZ-binding motif lies at 692 to 694 (SQV).

The protein belongs to the G-protein coupled receptor Fz/Smo family. Component of a Wnt-signaling complex that contains a WNT protein, a FZD protein and LRP5 or LRP6. Interacts directly with LRP5 or LRP6; the interaction is promoted by Wnt-binding and signaling and inhibited by DKK1. Interacts with GPOC, RSPO1 and RSPO3. Interacts with glypican GPC3. In terms of processing, ubiquitinated by ZNRF3, leading to its degradation by the proteasome. In terms of tissue distribution, most abundant in fetal kidney, followed by brain and lung. In adult tissues, expressed in kidney, heart, pancreas and skeletal muscle.

The protein localises to the membrane. Its subcellular location is the golgi apparatus. It is found in the cell membrane. Its function is as follows. Receptor for Wnt proteins. Component of the Wnt-Fzd-LRP5-LRP6 complex that triggers beta-catenin signaling through inducing aggregation of receptor-ligand complexes into ribosome-sized signalosomes. The beta-catenin canonical signaling pathway leads to the activation of disheveled proteins, inhibition of GSK-3 kinase, nuclear accumulation of beta-catenin and activation of Wnt target genes. A second signaling pathway involving PKC and calcium fluxes has been seen for some family members, but it is not yet clear if it represents a distinct pathway or if it can be integrated in the canonical pathway, as PKC seems to be required for Wnt-mediated inactivation of GSK-3 kinase. Both pathways seem to involve interactions with G-proteins. May be involved in transduction and intercellular transmission of polarity information during tissue morphogenesis and/or in differentiated tissues. Coreceptor along with RYK of Wnt proteins, such as WNT1. This Homo sapiens (Human) protein is Frizzled-8 (FZD8).